The sequence spans 284 residues: Tropomyosin Lep s 1.0101 (284 aa).

Residues 1–273 are a coiled coil; it reads MEAIKKKMQA…KDRYRALADE (273 aa). Residues 155-171 show a composition bias toward basic and acidic residues; the sequence is AEDADGKSDEVSRKMAQ. The tract at residues 155 to 187 is disordered; the sequence is AEDADGKSDEVSRKMAQVEDDLEVAEDRVKSGD.

The protein belongs to the tropomyosin family. In terms of assembly, homodimer.

Its function is as follows. Tropomyosin, in association with the troponin complex, plays a central role in the calcium dependent regulation of muscle contraction. This chain is Tropomyosin Lep s 1.0101, found in Lepisma saccharinum (Silverfish).